The sequence spans 422 residues: Leucine-rich repeat protein 1 (422 aa).

LRR repeat units follow at residues 184–207 (LKNL…IGDL), 209–230 (HLQE…LCTS), 233–258 (QKSL…QFRE), 260–279 (TNLN…IGQL), 280–301 (TNLR…EFKM), and 304–327 (LEYL…KLQV).

Component of the probable ECS(LRR1) E3 ubiquitin-protein ligase complex which contains CUL2, RBX1, Elongin BC complex and LRR1. Interacts with CUL2, RBX1, ELOB and ELOC.

Its subcellular location is the nucleus. It functions in the pathway protein modification; protein ubiquitination. Substrate recognition subunit of an ECS (Elongin BC-CUL2/5-SOCS-box protein) E3 ubiquitin-protein ligase complex which mediates the ubiquitination and subsequent proteasomal degradation of target proteins. ECS(LRR1) ubiquitinates MCM7 and promotes CMG replisome disassembly by VCP and chromatin extraction during S-phase. May negatively regulate the 4-1BB-mediated signaling cascades which result in the activation of NK-kappaB and JNK1. The chain is Leucine-rich repeat protein 1 from Mus musculus (Mouse).